Reading from the N-terminus, the 229-residue chain is MKTIIHNDWQTVLEPEFAKPYYGQLHQFLKQEYATTTVYPEMHHIFQAFEWTPFEQVKVVILGQDPYHGPHQAHGCSFSVLPGVKVPPSLKNIYKELQTDVGFNPVNHGYLKAWADQGVFLLNTVLTVRAGEANSHRQQGWEQLTDAAIAALSQRGHVVFILWGNSAKAKRALIDESQNAVLTAVHPSPLAAYHGFFGSKPFSQTNQQLKQWAMTPINWQLPQDVSEQK.

The active-site Proton acceptor is the Asp-65.

The protein belongs to the uracil-DNA glycosylase (UDG) superfamily. UNG family.

The protein localises to the cytoplasm. It catalyses the reaction Hydrolyzes single-stranded DNA or mismatched double-stranded DNA and polynucleotides, releasing free uracil.. Functionally, excises uracil residues from the DNA which can arise as a result of misincorporation of dUMP residues by DNA polymerase or due to deamination of cytosine. The polypeptide is Uracil-DNA glycosylase (Latilactobacillus sakei subsp. sakei (strain 23K) (Lactobacillus sakei subsp. sakei)).